Consider the following 215-residue polypeptide: Adenylyl-sulfate kinase (215 aa).

An ATP-binding site is contributed by 46–53 (GLSGAGKS). The Phosphoserine intermediate role is filled by Ser120.

Belongs to the APS kinase family.

The enzyme catalyses adenosine 5'-phosphosulfate + ATP = 3'-phosphoadenylyl sulfate + ADP + H(+). The protein operates within sulfur metabolism; hydrogen sulfide biosynthesis; sulfite from sulfate: step 2/3. In terms of biological role, catalyzes the synthesis of activated sulfate. The polypeptide is Adenylyl-sulfate kinase (cysC) (Vibrio cholerae serotype O1 (strain ATCC 39315 / El Tor Inaba N16961)).